The sequence spans 790 residues: Probable E3 ubiquitin-protein ligase MARCHF10 (790 aa).

A disordered region spans residues 33-240 (LKRQEHKKEP…PQNEPHTALS (208 aa)). Residues 34-48 (KRQEHKKEPNEKKQE) are compositionally biased toward basic and acidic residues. A compositionally biased stretch (low complexity) spans 61 to 70 (FSSGSSCKQS). Ser78 is modified (phosphoserine). Basic and acidic residues predominate over residues 218–227 (PLERQKKGDP). Residues 230–240 (RPQNEPHTALS) are compositionally biased toward polar residues. The stretch at 284–308 (LSLNNEQENYDTEEETRTEEELLLA) forms a coiled coil. Disordered stretches follow at residues 323 to 416 (GTSA…EDVS) and 507 to 569 (LSPI…RHLQ). 3 stretches are compositionally biased toward polar residues: residues 355-370 (RKTS…SSPG), 406-416 (GVTQVSAEDVS), and 511-520 (RNRNPSAASE). Residues 521–533 (SHSEDTQGEEERA) show a composition bias toward basic and acidic residues. The span at 534 to 563 (STSQAQESPLLSDLPNPQSSMALGDSPSSP) shows a compositional bias: polar residues. The RING-CH-type zinc finger occupies 633-703 (DSEEEGDLCR…EMCKQGLLVD (71 aa)). Zn(2+) contacts are provided by Cys641, Cys644, Cys659, Cys661, His669, Cys672, Cys693, and Cys696. The segment at 757 to 790 (ERMSRNYPQPRPEESESSESGDGNESNVYPGRVI) is disordered. Positions 774–783 (SESGDGNESN) are enriched in low complexity.

It carries out the reaction S-ubiquitinyl-[E2 ubiquitin-conjugating enzyme]-L-cysteine + [acceptor protein]-L-lysine = [E2 ubiquitin-conjugating enzyme]-L-cysteine + N(6)-ubiquitinyl-[acceptor protein]-L-lysine.. It participates in protein modification; protein ubiquitination. E3 ubiquitin-protein ligase. E3 ubiquitin ligases accept ubiquitin from an E2 ubiquitin-conjugating enzyme in the form of a thioester and then directly transfer the ubiquitin to targeted substrates. The chain is Probable E3 ubiquitin-protein ligase MARCHF10 (Marchf10) from Rattus norvegicus (Rat).